The sequence spans 102 residues: Small ribosomal subunit protein uS10 (102 aa).

The protein belongs to the universal ribosomal protein uS10 family. As to quaternary structure, part of the 30S ribosomal subunit.

Its function is as follows. Involved in the binding of tRNA to the ribosomes. The polypeptide is Small ribosomal subunit protein uS10 (Planobispora rosea).